We begin with the raw amino-acid sequence, 112 residues long: UPF0060 membrane protein AAur_4166 (112 aa).

4 helical membrane passes run 8–28, 33–53, 62–82, and 91–111; these read ILFVLAAVAEIGGAWLIWQAV, AWWWAGLGVVALGIYGFFAAF, VLAAYGGVFIAGSLGWGMLMD, and VIGAAICIVGVGVIMFAPRPG.

It belongs to the UPF0060 family.

The protein localises to the cell membrane. The protein is UPF0060 membrane protein AAur_4166 of Paenarthrobacter aurescens (strain TC1).